The sequence spans 388 residues: Succinate--CoA ligase [ADP-forming] subunit beta (388 aa).

The ATP-grasp domain maps to 9-244; sequence KQLFAEFGLP…PSQEDKREAH (236 aa). ATP-binding positions include K46, 53–55, E99, S102, and E107; that span reads GRG. Residues N199 and D213 each contribute to the Mg(2+) site. Residues N264 and 321-323 contribute to the substrate site; that span reads GIV.

This sequence belongs to the succinate/malate CoA ligase beta subunit family. As to quaternary structure, heterotetramer of two alpha and two beta subunits. Mg(2+) is required as a cofactor.

The catalysed reaction is succinate + ATP + CoA = succinyl-CoA + ADP + phosphate. It carries out the reaction GTP + succinate + CoA = succinyl-CoA + GDP + phosphate. It participates in carbohydrate metabolism; tricarboxylic acid cycle; succinate from succinyl-CoA (ligase route): step 1/1. In terms of biological role, succinyl-CoA synthetase functions in the citric acid cycle (TCA), coupling the hydrolysis of succinyl-CoA to the synthesis of either ATP or GTP and thus represents the only step of substrate-level phosphorylation in the TCA. The beta subunit provides nucleotide specificity of the enzyme and binds the substrate succinate, while the binding sites for coenzyme A and phosphate are found in the alpha subunit. The chain is Succinate--CoA ligase [ADP-forming] subunit beta from Vibrio vulnificus (strain CMCP6).